A 129-amino-acid polypeptide reads, in one-letter code: Transcription antitermination protein NusB (129 aa).

This sequence belongs to the NusB family.

Its function is as follows. Involved in transcription antitermination. Required for transcription of ribosomal RNA (rRNA) genes. Binds specifically to the boxA antiterminator sequence of the ribosomal RNA (rrn) operons. This is Transcription antitermination protein NusB from Bacillus licheniformis (strain ATCC 14580 / DSM 13 / JCM 2505 / CCUG 7422 / NBRC 12200 / NCIMB 9375 / NCTC 10341 / NRRL NRS-1264 / Gibson 46).